Reading from the N-terminus, the 221-residue chain is Superoxide dismutase [Mn] 1, mitochondrial (221 aa).

Residues 1 to 24 (MLQNTVRCVSKLVQPITGVAAVRS) constitute a mitochondrion transit peptide. 4 residues coordinate Mn(2+): His50, His98, Asp182, and His186.

Belongs to the iron/manganese superoxide dismutase family. As to quaternary structure, homotetramer. Mn(2+) serves as cofactor.

It is found in the mitochondrion matrix. It catalyses the reaction 2 superoxide + 2 H(+) = H2O2 + O2. Destroys superoxide anion radicals which are normally produced within the cells and which are toxic to biological systems. This is Superoxide dismutase [Mn] 1, mitochondrial (sod-2) from Caenorhabditis elegans.